Here is a 188-residue protein sequence, read N- to C-terminus: Elongation factor P (188 aa).

Belongs to the elongation factor P family.

It localises to the cytoplasm. The protein operates within protein biosynthesis; polypeptide chain elongation. Functionally, involved in peptide bond synthesis. Stimulates efficient translation and peptide-bond synthesis on native or reconstituted 70S ribosomes in vitro. Probably functions indirectly by altering the affinity of the ribosome for aminoacyl-tRNA, thus increasing their reactivity as acceptors for peptidyl transferase. This Anaplasma marginale (strain St. Maries) protein is Elongation factor P.